Consider the following 437-residue polypeptide: GTPase Der (437 aa).

2 EngA-type G domains span residues 4–167 and 176–351; these read PVIA…PEDE and IRIS…ENHN. Residues 10–17, 57–61, 119–122, 182–189, 229–233, and 294–297 contribute to the GTP site; these read GRPNVGKS, DTGGI, NKID, DTAGM, and NKWD. The 85-residue stretch at 352–436 folds into the KH-like domain; it reads LRVPTHVLND…PIKIIARKKN (85 aa).

This sequence belongs to the TRAFAC class TrmE-Era-EngA-EngB-Septin-like GTPase superfamily. EngA (Der) GTPase family. As to quaternary structure, associates with the 50S ribosomal subunit.

In terms of biological role, GTPase that plays an essential role in the late steps of ribosome biogenesis. The chain is GTPase Der from Halalkalibacterium halodurans (strain ATCC BAA-125 / DSM 18197 / FERM 7344 / JCM 9153 / C-125) (Bacillus halodurans).